Reading from the N-terminus, the 114-residue chain is Large ribosomal subunit protein bL20 (114 aa).

Belongs to the bacterial ribosomal protein bL20 family.

Functionally, binds directly to 23S ribosomal RNA and is necessary for the in vitro assembly process of the 50S ribosomal subunit. It is not involved in the protein synthesizing functions of that subunit. The protein is Large ribosomal subunit protein bL20 of Anaeromyxobacter dehalogenans (strain 2CP-1 / ATCC BAA-258).